We begin with the raw amino-acid sequence, 300 residues long: N-acetylmuramic acid 6-phosphate etherase 1 (300 aa).

One can recognise an SIS domain in the interval 59-222; sequence AAERFKKGGR…STGIMVKVGN (164 aa). Residue glutamate 87 is the Proton donor of the active site. Glutamate 118 is an active-site residue.

It belongs to the GCKR-like family. MurNAc-6-P etherase subfamily. In terms of assembly, homodimer.

It catalyses the reaction N-acetyl-D-muramate 6-phosphate + H2O = N-acetyl-D-glucosamine 6-phosphate + (R)-lactate. Its pathway is amino-sugar metabolism; N-acetylmuramate degradation. Its function is as follows. Specifically catalyzes the cleavage of the D-lactyl ether substituent of MurNAc 6-phosphate, producing GlcNAc 6-phosphate and D-lactate. This Enterococcus faecalis (strain ATCC 700802 / V583) protein is N-acetylmuramic acid 6-phosphate etherase 1.